The following is a 319-amino-acid chain: Molybdenum cofactor biosynthesis bifunctional protein (319 aa).

Positions 1-145 (MIDVGDKAVT…GKSGHWQRPA (145 aa)) are molybdenum cofactor biosynthesis protein C. Residues 61–63 (LCH) and 99–100 (ME) each bind substrate. Residue Asp-114 is part of the active site. Residues 146-319 (IAPDVAPTGA…KGADHGTVKG (174 aa)) are molybdenum cofactor biosynthesis protein B.

In the N-terminal section; belongs to the MoaC family. This sequence in the C-terminal section; belongs to the MoaB/Mog family.

The catalysed reaction is (8S)-3',8-cyclo-7,8-dihydroguanosine 5'-triphosphate = cyclic pyranopterin phosphate + diphosphate. It functions in the pathway cofactor biosynthesis; molybdopterin biosynthesis. Its function is as follows. Catalyzes the conversion of (8S)-3',8-cyclo-7,8-dihydroguanosine 5'-triphosphate to cyclic pyranopterin monophosphate (cPMP). The chain is Molybdenum cofactor biosynthesis bifunctional protein (moaCB) from Synechococcus elongatus (strain ATCC 33912 / PCC 7942 / FACHB-805) (Anacystis nidulans R2).